A 580-amino-acid chain; its full sequence is DNA ligase B (580 aa).

Lys-135 (N6-AMP-lysine intermediate) is an active-site residue.

Belongs to the NAD-dependent DNA ligase family. LigB subfamily.

It carries out the reaction NAD(+) + (deoxyribonucleotide)n-3'-hydroxyl + 5'-phospho-(deoxyribonucleotide)m = (deoxyribonucleotide)n+m + AMP + beta-nicotinamide D-nucleotide.. Catalyzes the formation of phosphodiester linkages between 5'-phosphoryl and 3'-hydroxyl groups in double-stranded DNA using NAD as a coenzyme and as the energy source for the reaction. In Photorhabdus laumondii subsp. laumondii (strain DSM 15139 / CIP 105565 / TT01) (Photorhabdus luminescens subsp. laumondii), this protein is DNA ligase B.